Here is a 537-residue protein sequence, read N- to C-terminus: Hexahomomethionine N-hydroxylase (537 aa).

Residues 7–27 traverse the membrane as a helical segment; sequence FNTCFQILLGFIVFIASITLL.

It belongs to the cytochrome P450 family. Requires heme as cofactor. As to expression, highly expressed in hypocotyl and roots. Lower expression in siliques, stems and leaves. Barely detectable in flowers. Expressed only in the vascular bundles in apical plant parts.

Its subcellular location is the endoplasmic reticulum membrane. The enzyme catalyses L-hexahomomethionine + 2 reduced [NADPH--hemoprotein reductase] + 2 O2 = (E)-9-(methylsulfanyl)nonanal oxime + 2 oxidized [NADPH--hemoprotein reductase] + CO2 + 3 H2O + 2 H(+). It carries out the reaction L-pentahomomethionine + 2 reduced [NADPH--hemoprotein reductase] + 2 O2 = (E)-8-(methylsulfanyl)octanal oxime + 2 oxidized [NADPH--hemoprotein reductase] + CO2 + 3 H2O + 2 H(+). The catalysed reaction is an L-polyhomomethionine + 2 reduced [NADPH--hemoprotein reductase] + 2 O2 = an (E)-omega-(methylsulfanyl)-alkanal oxime + 2 oxidized [NADPH--hemoprotein reductase] + CO2 + 3 H2O + 2 H(+). Functionally, catalyzes the conversion of the long chain elongated methionines penta- and hexahomomethionine to their corresponding aldoximes 8-methylthiooctanaldoxime and 9-methylthiononanaldoxime. The protein is Hexahomomethionine N-hydroxylase (CYP79F2) of Arabidopsis thaliana (Mouse-ear cress).